A 377-amino-acid chain; its full sequence is MPIISLPADPTSPSQSLTPFPIQLDTKDGKAGKLLKQIRIRYLNEPNSRHTPITFINTYGFVYARDTSGGIHSEISSDLAAGSITACMMKLGPGPNIQNANLVLRSLNEFYVKVKKTSSQREEAVFELVNIPTLLREHALCKRKMLVCSAEKFLKNPSKLQAGFEYVYIPTFVSITYSPRNLNYQVARPILKFRSRFVYSIHLELILRLLCKSDSPLMKSYNADRTGRGCLASVWIHVCNILKNKSIKQQGRESYFIAKCMSMQLQVSIADLWGPTIIIKSLGHIPKTALPFFSKDGIACHPLQDVSPNLAKSLWSVGCEIESAKLILQESDLNELMGHQDLITDKIAIRSGQRTFERSKFSPFKKYASIPNLEAIN.

The protein belongs to the morbillivirus/respirovirus/rubulavirus M protein family.

Its subcellular location is the virion. Its function is as follows. The M protein has a crucial role in virus assembly and interacts with the RNP complex as well as with the viral membrane. This is Matrix protein (M) from Homo sapiens (Human).